We begin with the raw amino-acid sequence, 472 residues long: Glutamate--tRNA ligase (472 aa).

The 'HIGH' region motif lies at 18 to 28 (PSPTGYLHIGG). The segment covering 122–138 (RARGEKPRYDGRWRPEP) has biased composition (basic and acidic residues). Residues 122–150 (RARGEKPRYDGRWRPEPGKTLPVPPSGVQ) form a disordered region. A 'KMSKS' region motif is present at residues 250 to 254 (KLSKR). Lys253 is a binding site for ATP.

The protein belongs to the class-I aminoacyl-tRNA synthetase family. Glutamate--tRNA ligase type 1 subfamily. In terms of assembly, monomer.

Its subcellular location is the cytoplasm. It carries out the reaction tRNA(Glu) + L-glutamate + ATP = L-glutamyl-tRNA(Glu) + AMP + diphosphate. Its function is as follows. Catalyzes the attachment of glutamate to tRNA(Glu) in a two-step reaction: glutamate is first activated by ATP to form Glu-AMP and then transferred to the acceptor end of tRNA(Glu). The protein is Glutamate--tRNA ligase of Thiobacillus denitrificans (strain ATCC 25259 / T1).